A 37-amino-acid polypeptide reads, in one-letter code: Large ribosomal subunit protein bL36 (37 aa).

Belongs to the bacterial ribosomal protein bL36 family.

The protein is Large ribosomal subunit protein bL36 of Paracidovorax citrulli (strain AAC00-1) (Acidovorax citrulli).